A 768-amino-acid chain; its full sequence is DNA topoisomerase 4 subunit A (768 aa).

In terms of domain architecture, Topo IIA-type catalytic spans 38 to 521 (LPEVSDGQKP…AGRAVLTQTA (484 aa)). Tyr126 (O-(5'-phospho-DNA)-tyrosine intermediate) is an active-site residue.

The protein belongs to the type II topoisomerase GyrA/ParC subunit family. ParC type 1 subfamily. As to quaternary structure, heterotetramer composed of ParC and ParE.

The protein localises to the cell membrane. The catalysed reaction is ATP-dependent breakage, passage and rejoining of double-stranded DNA.. Its function is as follows. Topoisomerase IV is essential for chromosome segregation. It relaxes supercoiled DNA. Performs the decatenation events required during the replication of a circular DNA molecule. This chain is DNA topoisomerase 4 subunit A, found in Neisseria gonorrhoeae.